A 365-amino-acid chain; its full sequence is Ribosomal RNA large subunit methyltransferase F (365 aa).

A disordered region spans residues 1 to 49; sequence MSKPAVKSVQSATAKTATRAVNIRQKVKAPKQAKPEAKGRVRPSKDKPR. Positions 33 to 49 are enriched in basic and acidic residues; sequence AKPEAKGRVRPSKDKPR.

The protein belongs to the methyltransferase superfamily. METTL16/RlmF family.

It localises to the cytoplasm. It catalyses the reaction adenosine(1618) in 23S rRNA + S-adenosyl-L-methionine = N(6)-methyladenosine(1618) in 23S rRNA + S-adenosyl-L-homocysteine + H(+). Specifically methylates the adenine in position 1618 of 23S rRNA. The polypeptide is Ribosomal RNA large subunit methyltransferase F (Shewanella baltica (strain OS185)).